Here is a 263-residue protein sequence, read N- to C-terminus: tRNA uridine(34) hydroxylase (263 aa).

One can recognise a Rhodanese domain in the interval 129–223 (EGREVVTLDT…YFEETDGAFY (95 aa)). The active-site Cysteine persulfide intermediate is Cys-183.

This sequence belongs to the TrhO family.

It catalyses the reaction uridine(34) in tRNA + AH2 + O2 = 5-hydroxyuridine(34) in tRNA + A + H2O. In terms of biological role, catalyzes oxygen-dependent 5-hydroxyuridine (ho5U) modification at position 34 in tRNAs. In Delftia acidovorans (strain DSM 14801 / SPH-1), this protein is tRNA uridine(34) hydroxylase.